The following is a 147-amino-acid chain: Small ribosomal subunit protein eS19 (147 aa).

It belongs to the eukaryotic ribosomal protein eS19 family. In terms of assembly, part of the 30S ribosomal subunit.

In terms of biological role, may be involved in maturation of the 30S ribosomal subunit. In Archaeoglobus fulgidus (strain ATCC 49558 / DSM 4304 / JCM 9628 / NBRC 100126 / VC-16), this protein is Small ribosomal subunit protein eS19.